A 155-amino-acid polypeptide reads, in one-letter code: Protein FAM201A (155 aa).

The tract at residues 130 to 155 (QDQGCGQHRPHSPRLVDIALPGGGWT) is disordered.

The protein is Protein FAM201A (FAM201A) of Homo sapiens (Human).